The sequence spans 321 residues: GDP-L-fucose synthase (321 aa).

14 to 20 (GGSGLVG) lines the NADP(+) pocket. Residue Tyr143 is the Proton donor/acceptor of the active site. NADP(+) contacts are provided by residues Lys147, 170–173 (PTNV), and His186. Substrate contacts are provided by Lys194, Trp208, Arg215, and Asp277.

The protein belongs to the NAD(P)-dependent epimerase/dehydratase family. Fucose synthase subfamily. Homodimer.

The catalysed reaction is GDP-beta-L-fucose + NADP(+) = GDP-4-dehydro-alpha-D-rhamnose + NADPH + H(+). Its pathway is nucleotide-sugar biosynthesis; GDP-L-fucose biosynthesis via de novo pathway; GDP-L-fucose from GDP-alpha-D-mannose: step 2/2. In terms of biological role, catalyzes the two-step NADP-dependent conversion of GDP-4-dehydro-6-deoxy-D-mannose to GDP-fucose, involving an epimerase and a reductase reaction. This chain is GDP-L-fucose synthase, found in Homo sapiens (Human).